Consider the following 43-residue polypeptide: Potassium channel toxin gamma-KTx 4.3 (43 aa).

4 disulfides stabilise this stretch: cysteine 5/cysteine 23, cysteine 11/cysteine 34, cysteine 20/cysteine 39, and cysteine 24/cysteine 41.

The protein belongs to the ergtoxin family. Gamma-KTx 4 subfamily. As to expression, expressed by the venom gland.

The protein resides in the secreted. Reversibly blocks Kv11/ERG potassium channels. The chain is Potassium channel toxin gamma-KTx 4.3 from Centruroides exilicauda (Bark scorpion).